A 600-amino-acid polypeptide reads, in one-letter code: NADH-quinone oxidoreductase subunit C/D (600 aa).

The interval 1–190 (MVNNMTDLTA…SPFELTKAKQ (190 aa)) is NADH dehydrogenase I subunit C. The tract at residues 214 to 600 (DFMFLNLGPN…IDFVMSDVDR (387 aa)) is NADH dehydrogenase I subunit D.

The protein in the N-terminal section; belongs to the complex I 30 kDa subunit family. This sequence in the C-terminal section; belongs to the complex I 49 kDa subunit family. As to quaternary structure, NDH-1 is composed of 13 different subunits. Subunits NuoB, CD, E, F, and G constitute the peripheral sector of the complex.

It localises to the cell inner membrane. The catalysed reaction is a quinone + NADH + 5 H(+)(in) = a quinol + NAD(+) + 4 H(+)(out). Functionally, NDH-1 shuttles electrons from NADH, via FMN and iron-sulfur (Fe-S) centers, to quinones in the respiratory chain. The immediate electron acceptor for the enzyme in this species is believed to be ubiquinone. Couples the redox reaction to proton translocation (for every two electrons transferred, four hydrogen ions are translocated across the cytoplasmic membrane), and thus conserves the redox energy in a proton gradient. This Escherichia coli O127:H6 (strain E2348/69 / EPEC) protein is NADH-quinone oxidoreductase subunit C/D.